Consider the following 248-residue polypeptide: Ubiquinone biosynthesis O-methyltransferase (248 aa).

S-adenosyl-L-methionine is bound by residues R40, G71, D92, and M135.

It belongs to the methyltransferase superfamily. UbiG/COQ3 family.

It catalyses the reaction a 3-demethylubiquinol + S-adenosyl-L-methionine = a ubiquinol + S-adenosyl-L-homocysteine + H(+). The enzyme catalyses a 3-(all-trans-polyprenyl)benzene-1,2-diol + S-adenosyl-L-methionine = a 2-methoxy-6-(all-trans-polyprenyl)phenol + S-adenosyl-L-homocysteine + H(+). It functions in the pathway cofactor biosynthesis; ubiquinone biosynthesis. Its function is as follows. O-methyltransferase that catalyzes the 2 O-methylation steps in the ubiquinone biosynthetic pathway. This is Ubiquinone biosynthesis O-methyltransferase from Roseobacter denitrificans (strain ATCC 33942 / OCh 114) (Erythrobacter sp. (strain OCh 114)).